Consider the following 360-residue polypeptide: Aminomethyltransferase (360 aa).

The protein belongs to the GcvT family. In terms of assembly, the glycine cleavage system is composed of four proteins: P, T, L and H.

The enzyme catalyses N(6)-[(R)-S(8)-aminomethyldihydrolipoyl]-L-lysyl-[protein] + (6S)-5,6,7,8-tetrahydrofolate = N(6)-[(R)-dihydrolipoyl]-L-lysyl-[protein] + (6R)-5,10-methylene-5,6,7,8-tetrahydrofolate + NH4(+). The glycine cleavage system catalyzes the degradation of glycine. In Pseudoalteromonas translucida (strain TAC 125), this protein is Aminomethyltransferase.